A 328-amino-acid chain; its full sequence is Alpha-tubulin N-acetyltransferase 2 (328 aa).

Residues 5 to 185 (SQVALLPKLS…NNFVVFHRYF (181 aa)) enclose the N-acetyltransferase domain. Acetyl-CoA is bound by residues 119–132 (FFVDTSFQRKGFGK) and 155–164 (SVKFLAFLRK). 2 disordered regions span residues 219 to 261 (EYQS…PGKK) and 282 to 328 (GGDP…TPEH). Over residues 238–248 (TPPPPLPPPLV) the composition is skewed to pro residues. Residues 312–328 (PTRSGVQYNIISGTPEH) show a composition bias toward polar residues.

Belongs to the acetyltransferase ATAT1 family.

The catalysed reaction is L-lysyl-[alpha-tubulin] + acetyl-CoA = N(6)-acetyl-L-lysyl-[alpha-tubulin] + CoA + H(+). Its function is as follows. Specifically acetylates 'Lys-40' in alpha-tubulin on the lumenal side of microtubules. Promotes microtubule destabilization and accelerates microtubule dynamics; this activity may be independent of acetylation activity. Acetylates alpha-tubulin with a slow enzymatic rate, due to a catalytic site that is not optimized for acetyl transfer. Enters the microtubule through each end and diffuses quickly throughout the lumen of microtubules. Acetylates only long/old microtubules because of its slow acetylation rate since it does not have time to act on dynamically unstable microtubules before the enzyme is released. The sequence is that of Alpha-tubulin N-acetyltransferase 2 from Trypanosoma cruzi (strain CL Brener).